Reading from the N-terminus, the 620-residue chain is Membralin (620 aa).

The tract at residues 1-33 is disordered; the sequence is MSEHVEPAAPGPGPNGGGGGPAPARGPRTPNLN. At Ser2 the chain carries N-acetylserine. Positions 22–31 are enriched in low complexity; the sequence is APARGPRTPN. Thr29 carries the phosphothreonine modification. The helical transmembrane segment at 70–90 threads the bilayer; it reads FFVLLKALFVLFVLAYIHIVF. Residue Asn189 is glycosylated (N-linked (GlcNAc...) asparagine). Helical transmembrane passes span 302-322, 346-366, and 426-446; these read TSYLAAFAIMVIFTLSVSMLL, IAFPAAPLLTVILALVGMEAI, and YSSLALVTSWLFIQHSMIYFF. 2 disordered regions span residues 474–517 and 568–620; these read TPTA…GPVA and SPLG…EVGS. Low complexity-rich tracts occupy residues 499–517 and 568–593; these read PPALGPVSPGASGSPGPVA and SPLGPAGGLPHAPQDSVPPSDSAASD.

The protein belongs to the membralin family. As to quaternary structure, interacts with ERLIN2.

The protein resides in the endoplasmic reticulum membrane. May have a role in the ERAD pathway required for clearance of misfolded proteins in the endoplasmic reticulum (ER). Promotes survival of motor neurons, probably by protecting against ER stress. The protein is Membralin (TMEM259) of Homo sapiens (Human).